The chain runs to 66 residues: Large ribosomal subunit protein uL29 (66 aa).

This sequence belongs to the universal ribosomal protein uL29 family.

The polypeptide is Large ribosomal subunit protein uL29 (Kosmotoga olearia (strain ATCC BAA-1733 / DSM 21960 / TBF 19.5.1)).